A 96-amino-acid chain; its full sequence is Large ribosomal subunit protein uL23 (96 aa).

The protein belongs to the universal ribosomal protein uL23 family. In terms of assembly, part of the 50S ribosomal subunit. Contacts protein L29, and trigger factor when it is bound to the ribosome.

One of the early assembly proteins it binds 23S rRNA. One of the proteins that surrounds the polypeptide exit tunnel on the outside of the ribosome. Forms the main docking site for trigger factor binding to the ribosome. This chain is Large ribosomal subunit protein uL23, found in Thermus thermophilus (strain ATCC BAA-163 / DSM 7039 / HB27).